The following is a 351-amino-acid chain: N-acetyl-gamma-glutamyl-phosphate reductase (351 aa).

Cys154 is an active-site residue.

The protein belongs to the NAGSA dehydrogenase family. Type 1 subfamily.

Its subcellular location is the cytoplasm. The catalysed reaction is N-acetyl-L-glutamate 5-semialdehyde + phosphate + NADP(+) = N-acetyl-L-glutamyl 5-phosphate + NADPH + H(+). It functions in the pathway amino-acid biosynthesis; L-arginine biosynthesis; N(2)-acetyl-L-ornithine from L-glutamate: step 3/4. Its function is as follows. Catalyzes the NADPH-dependent reduction of N-acetyl-5-glutamyl phosphate to yield N-acetyl-L-glutamate 5-semialdehyde. In Prochlorococcus marinus (strain MIT 9215), this protein is N-acetyl-gamma-glutamyl-phosphate reductase.